Consider the following 1058-residue polypeptide: Carbamoyl phosphate synthase large chain (1058 aa).

The carboxyphosphate synthetic domain stretch occupies residues 1–401 (MPKRTDIQKI…SLLKACRSLE (401 aa)). The ATP site is built by Arg-129, Arg-169, Gly-175, Gly-176, Arg-208, Ile-210, Glu-215, Gly-241, Ile-242, His-243, Gln-284, and Glu-298. The region spanning 133–327 (KQLMEELEQP…IAKLAAKIAV (195 aa)) is the ATP-grasp 1 domain. Residues Gln-284, Glu-298, and Asn-300 each coordinate Mg(2+). Residues Gln-284, Glu-298, and Asn-300 each coordinate Mn(2+). The interval 402 to 546 (IGVHHNEIPE…YSTYGWENES (145 aa)) is oligomerization domain. Residues 547 to 929 (IRSDKESVLV…ALYKAFEASY (383 aa)) form a carbamoyl phosphate synthetic domain region. In terms of domain architecture, ATP-grasp 2 spans 671–861 (EQALKELDIP…MAQVATKLIL (191 aa)). Positions 707, 746, 748, 752, 777, 778, 779, 780, 820, and 832 each coordinate ATP. Mg(2+) is bound by residues Gln-820, Glu-832, and Asn-834. Residues Gln-820, Glu-832, and Asn-834 each contribute to the Mn(2+) site. One can recognise an MGS-like domain in the interval 930–1058 (LHLPTFGNVV…ESRSFVTEAI (129 aa)). The segment at 930–1058 (LHLPTFGNVV…ESRSFVTEAI (129 aa)) is allosteric domain.

The protein belongs to the CarB family. Composed of two chains; the small (or glutamine) chain promotes the hydrolysis of glutamine to ammonia, which is used by the large (or ammonia) chain to synthesize carbamoyl phosphate. Tetramer of heterodimers (alpha,beta)4. Mg(2+) serves as cofactor. Mn(2+) is required as a cofactor.

It catalyses the reaction hydrogencarbonate + L-glutamine + 2 ATP + H2O = carbamoyl phosphate + L-glutamate + 2 ADP + phosphate + 2 H(+). The catalysed reaction is hydrogencarbonate + NH4(+) + 2 ATP = carbamoyl phosphate + 2 ADP + phosphate + 2 H(+). The protein operates within amino-acid biosynthesis; L-arginine biosynthesis; carbamoyl phosphate from bicarbonate: step 1/1. It participates in pyrimidine metabolism; UMP biosynthesis via de novo pathway; (S)-dihydroorotate from bicarbonate: step 1/3. Large subunit of the glutamine-dependent carbamoyl phosphate synthetase (CPSase). CPSase catalyzes the formation of carbamoyl phosphate from the ammonia moiety of glutamine, carbonate, and phosphate donated by ATP, constituting the first step of 2 biosynthetic pathways, one leading to arginine and/or urea and the other to pyrimidine nucleotides. The large subunit (synthetase) binds the substrates ammonia (free or transferred from glutamine from the small subunit), hydrogencarbonate and ATP and carries out an ATP-coupled ligase reaction, activating hydrogencarbonate by forming carboxy phosphate which reacts with ammonia to form carbamoyl phosphate. The sequence is that of Carbamoyl phosphate synthase large chain from Streptococcus pneumoniae (strain P1031).